A 101-amino-acid chain; its full sequence is Small ribosomal subunit protein uS10 (101 aa).

Belongs to the universal ribosomal protein uS10 family. Part of the 30S ribosomal subunit.

In terms of biological role, involved in the binding of tRNA to the ribosomes. This is Small ribosomal subunit protein uS10 from Brachyspira pilosicoli (Serpulina pilosicoli).